The following is a 265-amino-acid chain: Silaffin-1 (265 aa).

The N-terminal stretch at 1–19 is a signal peptide; sequence MKLTAIFPLLFTAVGYCAA. A propeptide spans 20–107 (acidic); that stretch reads QSIADLAAAN…DSEEEELRIL (88 aa). The disordered stretch occupies residues 37–106; it reads SAQLISADSS…EDSEEEELRI (70 aa). Residues 51–90 are compositionally biased toward low complexity; sequence DSSVESVDAASSDVSGSSVESVDVSGSSLESVDVSGSSLE. Residues 91–103 show a composition bias toward acidic residues; sequence SVDDSSEDSEEEE. One copy of the R1; atypical repeat lies at 108–140; sequence SSKKSGSYYSYGTKKSGSYSGYSTKKSASRRIL. The tract at residues 108–257 is 7 X 19 AA repeat of S-S-K-K-S-G-S-Y-S-G-S-K-G-S-K-R-R-[IL]-L; sequence SSKKSGSYYS…GSKGSKRRIL (150 aa). Position 110 is an N6-poly(methylaminopropyl)lysine (lysine 110). Position 111 is an N6,N6-dimethyllysine (lysine 111). The segment covering 122 to 133 has biased composition (low complexity); the sequence is KSGSYSGYSTKK. The tract at residues 122 to 265 is disordered; that stretch reads KSGSYSGYST…ILSGGLRGSM (144 aa). A propeptide spanning residues 137-140 is cleaved from the precursor; sequence RRIL. An R2; atypical repeat occupies 141–162; it reads SSKKSGSYSGYSTKKSGSRRIL. Positions 142–155 are enriched in low complexity; the sequence is SKKSGSYSGYSTKK. Lysine 143 carries the post-translational modification N6-poly(methylaminopropyl)lysine. At lysine 144 the chain carries N6,N6-dimethyllysine. The residue at position 154 (lysine 154) is an N6-poly(methylaminopropyl)lysine. N6,N6-dimethyllysine is present on lysine 155. Positions 159 to 162 are excised as a propeptide; the sequence is RRIL. Serine 163 and serine 164 each carry phosphoserine. Residues 163–181 form an R3 repeat; the sequence is SSKKSGSYSGSKGSKRRIL. Residues 164–174 are compositionally biased toward low complexity; it reads SKKSGSYSGSK. Lysine 165 is subject to N6-poly(methylaminopropyl)lysine. An N6,N6-dimethyllysine modification is found at lysine 166. Residues serine 167, serine 169, serine 171, and serine 173 each carry the phosphoserine modification. Lysine 174 bears the N6,N6,N6-trimethyl-5-hydroxylysine mark. The residue at position 176 (serine 176) is a Phosphoserine. Position 177 is an N6-poly(methylaminopropyl)lysine (lysine 177). Positions 178 to 181 are excised as a propeptide; that stretch reads RRIL. Residues serine 182 and serine 183 each carry the phosphoserine modification. The stretch at 182 to 200 is one R4 repeat; the sequence is SSKKSGSYSGSKGSKRRNL. A compositionally biased stretch (low complexity) spans 183–193; sequence SKKSGSYSGSK. Lysine 184 is subject to N6-poly(methylaminopropyl)lysine. Lysine 185 is modified (N6,N6-dimethyllysine). Phosphoserine is present on residues serine 186, serine 188, serine 190, and serine 192. The residue at position 193 (lysine 193) is an N6,N6,N6-trimethyl-5-hydroxylysine. Serine 195 carries the phosphoserine modification. Lysine 196 bears the N6-poly(methylaminopropyl)lysine mark. Residues 197–200 constitute a propeptide that is removed on maturation; sequence RRNL. Phosphoserine occurs at positions 201 and 202. Residues 201–219 form an R5 repeat; the sequence is SSKKSGSYSGSKGSKRRIL. The segment covering 202 to 212 has biased composition (low complexity); that stretch reads SKKSGSYSGSK. Lysine 203 is subject to N6-poly(methylaminopropyl)lysine. Lysine 204 is modified (N6,N6-dimethyllysine). Phosphoserine is present on residues serine 205, serine 207, serine 209, and serine 211. N6,N6,N6-trimethyl-5-hydroxylysine is present on lysine 212. Serine 214 carries the post-translational modification Phosphoserine. Residue lysine 215 is modified to N6-poly(methylaminopropyl)lysine. A propeptide spanning residues 216-219 is cleaved from the precursor; that stretch reads RRIL. 2 positions are modified to phosphoserine: serine 220 and serine 221. The R6 repeat unit spans residues 220 to 238; sequence SSKKSGSYSGSKGSKRRNL. Positions 221 to 231 are enriched in low complexity; sequence SKKSGSYSGSK. N6-poly(methylaminopropyl)lysine is present on lysine 222. The residue at position 223 (lysine 223) is an N6,N6-dimethyllysine. 4 positions are modified to phosphoserine: serine 224, serine 226, serine 228, and serine 230. Lysine 231 is modified (N6,N6,N6-trimethyl-5-hydroxylysine). Serine 233 is subject to Phosphoserine. N6-poly(methylaminopropyl)lysine is present on lysine 234. Positions 235 to 238 are excised as a propeptide; the sequence is RRNL. 2 positions are modified to phosphoserine: serine 239 and serine 240. An R7 repeat occupies 239–257; that stretch reads SSKKSGSYSGSKGSKRRIL. Low complexity predominate over residues 240–250; sequence SKKSGSYSGSK. Residue lysine 241 is modified to N6-poly(methylaminopropyl)lysine. Lysine 242 bears the N6,N6-dimethyllysine mark. 4 positions are modified to phosphoserine: serine 243, serine 245, serine 247, and serine 249. Lysine 250 bears the N6,N6,N6-trimethyl-5-hydroxylysine mark. Serine 252 is modified (phosphoserine). At lysine 253 the chain carries N6-poly(methylaminopropyl)lysine. A propeptide spanning residues 254 to 265 is cleaved from the precursor; the sequence is RRILSGGLRGSM.

As to quaternary structure, silaffin-1A peptides form large aggregates via electrostatic interactions due to intermolecular interactions between the negatively charged phosphate groups and the polyamine moieties. In terms of processing, N6-polymethylaminopropylated. Two lysine residues of each peptide bears 6 to 11 repeats of methyl-propylamine, which gives a possible template for nucleation, and may also control the silica colloid size within the silica deposition vesicle (SDV). Post-translationally, phosphorylated. All serine residues of the Silaffin-1A1 peptide are phosphorylated. Only minor amounts of the Silaffin-1A2 peptide are phosphorylated. Phosphorylation is essential for the activity. It may represent a source of anions required for silica formation of diatoms.

Catalyzes the polymerization of silica spheres from a silicilic acid solution. It therefore plays a central role in the formation of silica cell wall of diatoms. The polypeptide is Silaffin-1 (SIL1) (Cylindrotheca fusiformis (Marine diatom)).